A 791-amino-acid polypeptide reads, in one-letter code: Putative inactive tyrosine-protein kinase Wsck (791 aa).

An N-terminal signal peptide occupies residues 1 to 26 (MECGSHSGHRPIPIWLSSCLVAMCLG). The Extracellular portion of the chain corresponds to 27 to 401 (LPLGAAVPQE…YATFEKGQSS (375 aa)). A WSC domain is found at 39–125 (AYYYVGCYTA…VGVHSYYSTI (87 aa)). The region spanning 131–246 (GPHHLRISNK…ASIEATTEVG (116 aa)) is the Fibronectin type-III domain. N139, N217, and N329 each carry an N-linked (GlcNAc...) asparagine glycan. A helical membrane pass occupies residues 402-422 (VVALAVTCVIFGSCLLLSLIA). Over 423 to 791 (YFYLRYKTCR…PQLEAVATMG (369 aa)) the chain is Cytoplasmic. The Protein kinase domain maps to 493 to 758 (LNVNDVIGDG…DVAFGVRQLM (266 aa)). 499 to 507 (IGDGRFGEI) is an ATP binding site.

This sequence belongs to the protein kinase superfamily. Tyr protein kinase family.

The protein localises to the membrane. Probably lacks tyrosine-protein kinase activity. In Drosophila melanogaster (Fruit fly), this protein is Putative inactive tyrosine-protein kinase Wsck.